Here is a 755-residue protein sequence, read N- to C-terminus: Putative two-component response regulator-like APRR6 (755 aa).

Residues 14-128 form the Response regulatory domain; that stretch reads SILLIDHDTA…DIKNMWQHVF (115 aa).

Belongs to the ARR-like family.

Its subcellular location is the nucleus. This is Putative two-component response regulator-like APRR6 (APRR6) from Arabidopsis thaliana (Mouse-ear cress).